Reading from the N-terminus, the 445-residue chain is Exodeoxyribonuclease 7 large subunit (445 aa).

The protein belongs to the XseA family. In terms of assembly, heterooligomer composed of large and small subunits.

It localises to the cytoplasm. It catalyses the reaction Exonucleolytic cleavage in either 5'- to 3'- or 3'- to 5'-direction to yield nucleoside 5'-phosphates.. In terms of biological role, bidirectionally degrades single-stranded DNA into large acid-insoluble oligonucleotides, which are then degraded further into small acid-soluble oligonucleotides. The sequence is that of Exodeoxyribonuclease 7 large subunit from Limosilactobacillus reuteri (strain DSM 20016) (Lactobacillus reuteri).